A 380-amino-acid polypeptide reads, in one-letter code: Kappa-type opioid receptor (380 aa).

Residues 1 to 57 (MGRRRQGPAQPASELPARNACLLPNGSAWLPGWAEPDGNGSAGPQDEQLEPAHISPA) lie on the Extracellular side of the membrane. N-linked (GlcNAc...) asparagine glycosylation is found at Asn25 and Asn39. A helical membrane pass occupies residues 58 to 85 (IPVIITAVYSVVFVVGLVGNSLVMFVII). Over 86-95 (RYTKMKTATN) the chain is Cytoplasmic. Residues 96 to 119 (IYIFNLALADALVTTTMPFQSTVY) form a helical membrane-spanning segment. Residues 120–132 (LMNSWPFGDVLCK) lie on the Extracellular side of the membrane. The cysteines at positions 131 and 210 are disulfide-linked. A helical membrane pass occupies residues 133 to 154 (IVISIDYYNMFTSIFTLTMMSV). The Cytoplasmic portion of the chain corresponds to 155–173 (DRYIAVCHPVKALDFRTPL). A helical transmembrane segment spans residues 174 to 196 (KAKIINICIWLLSSSVGISAIIL). Residues 197-222 (GGTKVREDVDIIECSLQFPDDDYSWW) lie on the Extracellular side of the membrane. The helical transmembrane segment at 223–247 (DLFMKICVFVFAFVIPVLIIIVCYT) threads the bilayer. Topologically, residues 248 to 274 (LMILRLKSVRLLSGSREKDRNLRRITR) are cytoplasmic. A helical transmembrane segment spans residues 275–296 (LVLVVVAVFIICWTPIHIFILV). The Extracellular segment spans residues 297–311 (EALGSTSHSTAALSS). A helical transmembrane segment spans residues 312-333 (YYFCIALGYTNSSLNPILYAFL). Residues 334–380 (DENFKRCFRDFCFPIKMRMERQSTSRVRNTVQDPAYMRNVDGVNKPV) are Cytoplasmic-facing. Cys345 carries S-palmitoyl cysteine lipidation.

The protein belongs to the G-protein coupled receptor 1 family. In terms of assembly, interacts with NHERF1. Interacts with GABARAPL1.

It localises to the cell membrane. G-protein coupled opioid receptor that functions as a receptor for endogenous alpha-neoendorphins and dynorphins, but has low affinity for beta-endorphins. Also functions as a receptor for various synthetic opioids and for the psychoactive diterpene salvinorin A. Ligand binding causes a conformation change that triggers signaling via guanine nucleotide-binding proteins (G proteins) and modulates the activity of down-stream effectors, such as adenylate cyclase. Signaling leads to the inhibition of adenylate cyclase activity. Inhibits neurotransmitter release by reducing calcium ion currents and increasing potassium ion conductance. Plays a role in the perception of pain. Plays a role in mediating reduced physical activity upon treatment with synthetic opioids. Plays a role in the regulation of salivation in response to synthetic opioids. May play a role in arousal and regulation of autonomic and neuroendocrine functions. In Cavia porcellus (Guinea pig), this protein is Kappa-type opioid receptor (OPRK1).